The sequence spans 269 residues: Serine/arginine-rich splicing factor 5 (269 aa).

In terms of domain architecture, RRM 1 spans 4–74; it reads CRVFIGRLNP…ERVTIEHARA (71 aa). A disordered region spans residues 73 to 105; it reads RARSRGGRGRGRYSDRFSSRRPRNDRRNAPPVR. Positions 74–83 are enriched in basic residues; sequence ARSRGGRGRG. The residue at position 86 (serine 86) is a Phosphoserine. Residues 108–189 form the RRM 2 domain; it reads NRLIVENLSS…SKRHRSRSRS (82 aa). The residue at position 167 (lysine 167) is an N6-acetyllysine. Residues 174–269 form a disordered region; it reads IKLIEGSKRH…SRSRSVDSGN (96 aa). Residues 181-226 show a composition bias toward basic residues; that stretch reads KRHRSRSRSRSRTRSSSRSRSRSRSRRSKSYSRSRSRSRSRSKSRS. 5 positions are modified to phosphoserine: serine 224, serine 226, serine 230, serine 247, and serine 250. A compositionally biased stretch (low complexity) spans 239-251; sequence RGSSSRSKSPASV.

This sequence belongs to the splicing factor SR family. Found in a pre-mRNA splicing complex with SRSF4/SFRS4, SRSF5/SFRS5, SNRNP70, SNRPA1, SRRM1 and SRRM2. Interacts with RBMY; the interaction inhibits SRSF5 pre-mRNA splicing. Interacts (via RS domain) with PHF5A (via N-terminus). Extensively phosphorylated on serine residues in the RS domain.

The protein resides in the nucleus. May be required for progression through G1 and entry into S phase of cell growth. May play a regulatory role in pre-mRNA splicing. Autoregulates its own expression. Plays a role in constitutive splicing and can modulate the selection of alternative splice sites. This Mus musculus (Mouse) protein is Serine/arginine-rich splicing factor 5 (Srsf5).